Consider the following 201-residue polypeptide: 3-isopropylmalate dehydratase small subunit (201 aa).

Belongs to the LeuD family. LeuD type 1 subfamily. In terms of assembly, heterodimer of LeuC and LeuD.

It carries out the reaction (2R,3S)-3-isopropylmalate = (2S)-2-isopropylmalate. It participates in amino-acid biosynthesis; L-leucine biosynthesis; L-leucine from 3-methyl-2-oxobutanoate: step 2/4. Functionally, catalyzes the isomerization between 2-isopropylmalate and 3-isopropylmalate, via the formation of 2-isopropylmaleate. The chain is 3-isopropylmalate dehydratase small subunit from Shewanella frigidimarina (strain NCIMB 400).